The chain runs to 275 residues: Malonyl-[acyl-carrier protein] O-methyltransferase (275 aa).

The protein belongs to the methyltransferase superfamily.

The enzyme catalyses malonyl-[ACP] + S-adenosyl-L-methionine = malonyl-[ACP] methyl ester + S-adenosyl-L-homocysteine. The protein operates within cofactor biosynthesis; biotin biosynthesis. Functionally, converts the free carboxyl group of a malonyl-thioester to its methyl ester by transfer of a methyl group from S-adenosyl-L-methionine (SAM). It allows to synthesize pimeloyl-ACP via the fatty acid synthetic pathway. In Methylococcus capsulatus (strain ATCC 33009 / NCIMB 11132 / Bath), this protein is Malonyl-[acyl-carrier protein] O-methyltransferase.